The sequence spans 208 residues: 3-isopropylmalate dehydratase small subunit 2 (208 aa).

The protein belongs to the LeuD family. LeuD type 1 subfamily. Heterodimer of LeuC and LeuD.

The catalysed reaction is (2R,3S)-3-isopropylmalate = (2S)-2-isopropylmalate. Its pathway is amino-acid biosynthesis; L-leucine biosynthesis; L-leucine from 3-methyl-2-oxobutanoate: step 2/4. Functionally, catalyzes the isomerization between 2-isopropylmalate and 3-isopropylmalate, via the formation of 2-isopropylmaleate. The chain is 3-isopropylmalate dehydratase small subunit 2 from Salmonella choleraesuis (strain SC-B67).